The chain runs to 67 residues: DNA-directed RNA polymerase subunit omega (67 aa).

The protein belongs to the RNA polymerase subunit omega family. The RNAP catalytic core consists of 2 alpha, 1 beta, 1 beta' and 1 omega subunit. When a sigma factor is associated with the core the holoenzyme is formed, which can initiate transcription.

It catalyses the reaction RNA(n) + a ribonucleoside 5'-triphosphate = RNA(n+1) + diphosphate. Functionally, promotes RNA polymerase assembly. Latches the N- and C-terminal regions of the beta' subunit thereby facilitating its interaction with the beta and alpha subunits. The sequence is that of DNA-directed RNA polymerase subunit omega (rpoZ) from Treponema pallidum (strain Nichols).